The following is a 66-amino-acid chain: MKAADARAMSADQLKDELGNLKKEQFNLRFQKATGQLEKSSRINEVRKDIARVKTIARQKAAEAKA.

The protein belongs to the universal ribosomal protein uL29 family.

In Allorhizobium ampelinum (strain ATCC BAA-846 / DSM 112012 / S4) (Agrobacterium vitis (strain S4)), this protein is Large ribosomal subunit protein uL29.